Reading from the N-terminus, the 808-residue chain is Na(+)/H(+) antiporter 2 (808 aa).

9 helical membrane passes run 12–32 (HVAYSCVGIFSSIFSLVSLFV), 36–56 (LYIGESMVASIFGLIVGPHCL), 70–90 (ITLEISRILLCLQVFAVSVEL), 105–125 (LLVPVMTSGWLVIALFVWILV), 128–148 (LNFPASLLMGACITATDPVLA), 174–194 (CNDGLAIPFVFLSLDLLLYPG), 203–223 (WICVTILWECIFGSILGCIIG), 244–264 (FLAFYLILALTCAGFGSMLGV), and 267–287 (LLVSFFAGTAFAWDGWFAAKT). N-linked (GlcNAc...) asparagine glycosylation occurs at N291. 5 helical membrane passes run 294–314 (NVIDVLLNYAYFVYLGSILPW), 319–339 (NPDIGLDVWRLILLSLVVIFL), 361–381 (AMFIGHFGPIGVGAVFAAITS), 409–429 (VMACIWPITCFSIMTSVIVHG), and 432–452 (VAVIMLGRYLSTVTLMALPTG). Disordered regions lie at residues 478–499 (QRLDKEPSLSPGQIGGRTSGMV) and 541–562 (HASTNDSHGTTTANLGTSNGRA). Residues 542–561 (ASTNDSHGTTTANLGTSNGR) are compositionally biased toward polar residues. 2 N-linked (GlcNAc...) asparagine glycosylation sites follow: N545 and N602. A disordered region spans residues 774–808 (LHSEDEMADDEAESENDMDYEDSDGPASRFKDHAD). The span at 779-797 (EMADDEAESENDMDYEDSD) shows a compositional bias: acidic residues.

Belongs to the fungal Na(+)/H(+) exchanger family.

The protein localises to the membrane. In terms of biological role, sodium export from cell, takes up external protons in exchange for internal sodium ions. Seems to be poorly expressed. The chain is Na(+)/H(+) antiporter 2 (SOD22) from Zygosaccharomyces rouxii.